Consider the following 253-residue polypeptide: 3-deoxy-manno-octulosonate cytidylyltransferase (253 aa).

The protein belongs to the KdsB family.

The protein resides in the cytoplasm. The catalysed reaction is 3-deoxy-alpha-D-manno-oct-2-ulosonate + CTP = CMP-3-deoxy-beta-D-manno-octulosonate + diphosphate. It functions in the pathway nucleotide-sugar biosynthesis; CMP-3-deoxy-D-manno-octulosonate biosynthesis; CMP-3-deoxy-D-manno-octulosonate from 3-deoxy-D-manno-octulosonate and CTP: step 1/1. The protein operates within bacterial outer membrane biogenesis; lipopolysaccharide biosynthesis. Its function is as follows. Activates KDO (a required 8-carbon sugar) for incorporation into bacterial lipopolysaccharide in Gram-negative bacteria. The sequence is that of 3-deoxy-manno-octulosonate cytidylyltransferase from Neisseria meningitidis serogroup C / serotype 2a (strain ATCC 700532 / DSM 15464 / FAM18).